Here is a 274-residue protein sequence, read N- to C-terminus: Diaminopimelate epimerase (274 aa).

Residues Asn11, Gln44, and Asn64 each coordinate substrate. Catalysis depends on Cys73, which acts as the Proton donor. Substrate contacts are provided by residues 74 to 75 (GN), Asn157, Asn190, and 208 to 209 (ER). The active-site Proton acceptor is the Cys217. 218–219 (GS) is a substrate binding site.

It belongs to the diaminopimelate epimerase family. As to quaternary structure, homodimer.

The protein resides in the cytoplasm. It carries out the reaction (2S,6S)-2,6-diaminopimelate = meso-2,6-diaminopimelate. It participates in amino-acid biosynthesis; L-lysine biosynthesis via DAP pathway; DL-2,6-diaminopimelate from LL-2,6-diaminopimelate: step 1/1. Functionally, catalyzes the stereoinversion of LL-2,6-diaminopimelate (L,L-DAP) to meso-diaminopimelate (meso-DAP), a precursor of L-lysine and an essential component of the bacterial peptidoglycan. This Erwinia tasmaniensis (strain DSM 17950 / CFBP 7177 / CIP 109463 / NCPPB 4357 / Et1/99) protein is Diaminopimelate epimerase.